The chain runs to 555 residues: MTHLSDLDIANQSTLQPIKDIAASVGISEDALEPYGHYKAKIDINKITPRENKGKVVLVTAMSPTPAGEGKSTVTVGLADAFHELNKNVMVALREPALGPTFGIKGGATGGGYAQVLPMEDINLHFNGDFHAITTANNALSAFIDNHIHQGNELGIDQRRIEWKRVLDMNDRALRHVNVGLGGPTNGVPREDGFNITVASEIMAILCLSRSIKDLKDKISRITIGYTRDRKPVTVADLKVEGALAMILKDAIKPNLVQSIEGTPTLVHGGPFANIAHGCNSILATETARDLADIVVTEAGFGSDLGAEKFMDIKVREAGFDPAAVVVVATIRALKMHGGVAKDNLKEENVEAVKAGIVNLERHVNNIKKFGVEPVVAINAFIHDTDAEVEYVKSWAKENNVRIALTEVWKKGGKGGVDLANEVLEVIDQPNSFKPLYELELPLEQKIEKIVTEIYGGSKVTFSSKAQKQLKQFKENGWDNYPVCMAKTQYSFSDDQTLLGAPSGFEITIRELEAKTGAGFIVALTGAIMTMPGLPKKPAALNMDVTDDGHAIGLF.

65–72 (TPAGEGKS) contacts ATP.

Belongs to the formate--tetrahydrofolate ligase family.

It carries out the reaction (6S)-5,6,7,8-tetrahydrofolate + formate + ATP = (6R)-10-formyltetrahydrofolate + ADP + phosphate. It functions in the pathway one-carbon metabolism; tetrahydrofolate interconversion. The sequence is that of Formate--tetrahydrofolate ligase from Staphylococcus aureus (strain COL).